Reading from the N-terminus, the 424-residue chain is Hydrolase ORFZ (424 aa).

Residue Ser243 is the Nucleophile of the active site.

Belongs to the AB hydrolase superfamily. FUS2 hydrolase family. In terms of assembly, homodimer.

It functions in the pathway secondary metabolite biosynthesis. Functionally, hydrolyase; part of the gene cluster that mediates the biosynthesis of a tyrosine-derived cytochalasan acting as a fungal signal recognized by resistant rice plants and leads to avirulence in Pi33 resistant rice cultivars. The first step in the pathway is catalyzed by the hybrid PKS-NRPS ACE1, assisted by the enoyl reductase RAP1, that are responsible for fusion of the tyrosine precursor and the polyketide backbone. The polyketide synthase module (PKS) of ACE1 is responsible for the synthesis of the polyketide backbone and the downstream nonribosomal peptide synthetase (NRPS) amidates the carboxyl end of the polyketide with the tyrosine precursor. Because ACE1 lacks a designated enoylreductase (ER) domain, the required activity is provided the enoyl reductase RAP1. Reduction by the hydrolyase ORFZ, followed by dehydration and intra-molecular Diels-Alder cyclization by the Diels-Alderase ORF3 then yield the required isoindolone-fused macrocycle. A number of oxidative steps catalyzed by the tailoring enzymes identified within the cluster, including cytochrome P450 monooxygenases CYP1 to CYP4, the FAD-linked oxidoreductase OXR2 and the short-chain dehydrogenase/reductase OXR1, are further required to afford the final cytochalasans that confer avirulence and which have still to be identified. The monooxygenase CYP1 has been shown to be a site-selective C-18 hydroxylase whereas the function of CYP3 is the site-selective epoxidation of the C-6/C-7 olefin that is present in some intermediate compounds. Finally, SYN2 and RAP2 are not required for avirulence in Pi33 resistant rice cultivars. The sequence is that of Hydrolase ORFZ from Pyricularia oryzae (strain 70-15 / ATCC MYA-4617 / FGSC 8958) (Rice blast fungus).